A 217-amino-acid polypeptide reads, in one-letter code: Protein-L-isoaspartate O-methyltransferase (217 aa).

Serine 61 is a catalytic residue.

Belongs to the methyltransferase superfamily. L-isoaspartyl/D-aspartyl protein methyltransferase family.

It is found in the cytoplasm. It catalyses the reaction [protein]-L-isoaspartate + S-adenosyl-L-methionine = [protein]-L-isoaspartate alpha-methyl ester + S-adenosyl-L-homocysteine. In terms of biological role, catalyzes the methyl esterification of L-isoaspartyl residues in peptides and proteins that result from spontaneous decomposition of normal L-aspartyl and L-asparaginyl residues. It plays a role in the repair and/or degradation of damaged proteins. The protein is Protein-L-isoaspartate O-methyltransferase of Syntrophotalea carbinolica (strain DSM 2380 / NBRC 103641 / GraBd1) (Pelobacter carbinolicus).